The sequence spans 912 residues: Protein translocase subunit SecA (912 aa).

Residues Gln-86, 104–108 (GEGKT), and Asp-494 each bind ATP. A disordered region spans residues 860–912 (EAPEKPAQLQYTAPGEDGASQTRVEGRSSGRSGNPAKAAQDGARKPAPKKKKR).

The protein belongs to the SecA family. Monomer and homodimer. Part of the essential Sec protein translocation apparatus which comprises SecA, SecYEG and auxiliary proteins SecDF. Other proteins may also be involved.

The protein resides in the cell membrane. Its subcellular location is the cytoplasm. It catalyses the reaction ATP + H2O + cellular proteinSide 1 = ADP + phosphate + cellular proteinSide 2.. Part of the Sec protein translocase complex. Interacts with the SecYEG preprotein conducting channel. Has a central role in coupling the hydrolysis of ATP to the transfer of proteins into and across the cell membrane, serving as an ATP-driven molecular motor driving the stepwise translocation of polypeptide chains across the membrane. In Arthrobacter sp. (strain FB24), this protein is Protein translocase subunit SecA.